The following is a 308-amino-acid chain: MTPAERTVLMVVHTGREEATETARRVQKVLGDNGIALRVLSAEAVDRGPLHLAPDDMRAMGVEIEVVDADPLAARGCELVLVLGGDGTFLRAAELARNADIPVLGVNLGRIGFLAEAEAEAIDKVLEHVVARDYRVENRMTLDVVVRHQGTVSDHGWALNEVSLEKGPRLGVLGVVVEIDGRPVSAFGCDGVLVSTPTGSTAYAFSAGGPVLWPDLEAILVVPNNAHALFGRPMVTSPAATIAIEIEADGHDALVFCDGRREMLIPAGSRIEVKRCDTAVKWARLDSAPFTDRLVRKFRLPVTGWRGN.

Aspartate 86 (proton acceptor) is an active-site residue. NAD(+) is bound by residues 86 to 87 (DG), arginine 91, 160 to 161 (NE), aspartate 190, and 201 to 206 (TAYAFS).

It belongs to the NAD kinase family. A divalent metal cation serves as cofactor.

It is found in the cytoplasm. The catalysed reaction is NAD(+) + ATP = ADP + NADP(+) + H(+). Involved in the regulation of the intracellular balance of NAD and NADP, and is a key enzyme in the biosynthesis of NADP. Catalyzes specifically the phosphorylation on 2'-hydroxyl of the adenosine moiety of NAD to yield NADP. This Mycolicibacterium paratuberculosis (strain ATCC BAA-968 / K-10) (Mycobacterium paratuberculosis) protein is NAD kinase.